A 404-amino-acid polypeptide reads, in one-letter code: NADH-quinone oxidoreductase subunit D 1 (404 aa).

Belongs to the complex I 49 kDa subunit family. In terms of assembly, NDH-1 is composed of 14 different subunits. Subunits NuoB, C, D, E, F, and G constitute the peripheral sector of the complex.

The protein resides in the cell membrane. The catalysed reaction is a quinone + NADH + 5 H(+)(in) = a quinol + NAD(+) + 4 H(+)(out). Functionally, NDH-1 shuttles electrons from NADH, via FMN and iron-sulfur (Fe-S) centers, to quinones in the respiratory chain. The immediate electron acceptor for the enzyme in this species is believed to be a menaquinone. Couples the redox reaction to proton translocation (for every two electrons transferred, four hydrogen ions are translocated across the cytoplasmic membrane), and thus conserves the redox energy in a proton gradient. This chain is NADH-quinone oxidoreductase subunit D 1, found in Symbiobacterium thermophilum (strain DSM 24528 / JCM 14929 / IAM 14863 / T).